The primary structure comprises 267 residues: MSGCFPVSGLRCLSRDGRMAAQGAPRFLLTFDFDETIVDENSDDSIVRAAPGQRLPESLRATYREGFYNEYMQRVFKYLGEQGVRPRDLSAIYEAIPLSPGMSDLLQFVAKQGACFEVILISDANTFGVESSLRAAGHHSLFRRILSNPSGPDARGLLALRPFHTHSCARCPANMCKHKVLSDYLRERAHDGVHFERLFYVGDGANDFCPMGLLAGGDVAFPRRGYPMHRLIQEAQKAEPSSFRASVVPWETAADVRLHLQQVLKSC.

Residue Asp-32 is the Nucleophile of the active site. Positions 32 and 34 each coordinate Mg(2+). Asp-34 functions as the Proton donor in the catalytic mechanism. Residues Asp-43 and Asp-123 each contribute to the substrate site. Residue Asp-203 participates in Mg(2+) binding.

Belongs to the HAD-like hydrolase superfamily. PHOSPHO family. Mg(2+) serves as cofactor. Expressed at sites of mineralization in bone and cartilage. Highly expressed in osteoblast cell line SaOS-2 which produces a mineralized matrix, but not in MG-63 cell line, which do not mineralize.

The protein resides in the extracellular vesicle. The enzyme catalyses phosphoethanolamine + H2O = ethanolamine + phosphate. The catalysed reaction is phosphocholine + H2O = choline + phosphate. In terms of biological role, phosphatase that has a high activity toward phosphoethanolamine (PEA) and phosphocholine (PCho). Involved in the generation of inorganic phosphate for bone mineralization. Acts in a non-redundant manner with PHOSPHO1 in skeletal mineralization: while PHOSPHO1 mediates the initiation of hydroxyapatite crystallization in the matrix vesicles (MVs), ALPL/TNAP catalyzes the spread of hydroxyapatite crystallization in the extracellular matrix. In Homo sapiens (Human), this protein is Phosphoethanolamine/phosphocholine phosphatase.